A 235-amino-acid polypeptide reads, in one-letter code: Ribonuclease 3 (235 aa).

One can recognise an RNase III domain in the interval 6 to 131; sequence IDQLEKLTGH…LIAVIYLDGG (126 aa). Residue Glu44 participates in Mg(2+) binding. Asp48 is an active-site residue. Asp117 and Glu120 together coordinate Mg(2+). The active site involves Glu120. The region spanning 156 to 225 is the DRBM domain; that stretch reads DAKTQLQEWA…AEKILRREGI (70 aa).

The protein belongs to the ribonuclease III family. Homodimer. Mg(2+) is required as a cofactor.

The protein resides in the cytoplasm. It catalyses the reaction Endonucleolytic cleavage to 5'-phosphomonoester.. Functionally, digests double-stranded RNA. Involved in the processing of primary rRNA transcript to yield the immediate precursors to the large and small rRNAs (23S and 16S). Processes some mRNAs, and tRNAs when they are encoded in the rRNA operon. Processes pre-crRNA and tracrRNA of type II CRISPR loci if present in the organism. This Bartonella henselae (strain ATCC 49882 / DSM 28221 / CCUG 30454 / Houston 1) (Rochalimaea henselae) protein is Ribonuclease 3.